The primary structure comprises 711 residues: Polyribonucleotide nucleotidyltransferase (711 aa).

Mg(2+) contacts are provided by Asp-486 and Asp-492. Positions Pro-553–Ile-612 constitute a KH domain. The 69-residue stretch at Gly-622–Lys-690 folds into the S1 motif domain. A disordered region spans residues Lys-690–Glu-711. Over residues Glu-694–Glu-711 the composition is skewed to low complexity.

Belongs to the polyribonucleotide nucleotidyltransferase family. As to quaternary structure, component of the RNA degradosome, which is a multiprotein complex involved in RNA processing and mRNA degradation. Requires Mg(2+) as cofactor.

It is found in the cytoplasm. The catalysed reaction is RNA(n+1) + phosphate = RNA(n) + a ribonucleoside 5'-diphosphate. Its function is as follows. Involved in mRNA degradation. Catalyzes the phosphorolysis of single-stranded polyribonucleotides processively in the 3'- to 5'-direction. This is Polyribonucleotide nucleotidyltransferase from Citrobacter koseri (strain ATCC BAA-895 / CDC 4225-83 / SGSC4696).